A 500-amino-acid chain; its full sequence is Cytosol aminopeptidase (500 aa).

Mn(2+)-binding residues include K265 and D270. K277 is a catalytic residue. The Mn(2+) site is built by D288, D347, and E349. R351 is a catalytic residue.

It belongs to the peptidase M17 family. It depends on Mn(2+) as a cofactor.

The protein resides in the cytoplasm. It carries out the reaction Release of an N-terminal amino acid, Xaa-|-Yaa-, in which Xaa is preferably Leu, but may be other amino acids including Pro although not Arg or Lys, and Yaa may be Pro. Amino acid amides and methyl esters are also readily hydrolyzed, but rates on arylamides are exceedingly low.. The catalysed reaction is Release of an N-terminal amino acid, preferentially leucine, but not glutamic or aspartic acids.. In terms of biological role, presumably involved in the processing and regular turnover of intracellular proteins. Catalyzes the removal of unsubstituted N-terminal amino acids from various peptides. The chain is Cytosol aminopeptidase (pepA) from Rickettsia prowazekii (strain Madrid E).